The following is a 179-amino-acid chain: Large ribosomal subunit protein uL5 (179 aa).

This sequence belongs to the universal ribosomal protein uL5 family. As to quaternary structure, part of the 50S ribosomal subunit; part of the 5S rRNA/L5/L18/L25 subcomplex. Contacts the 5S rRNA and the P site tRNA. Forms a bridge to the 30S subunit in the 70S ribosome.

In terms of biological role, this is one of the proteins that bind and probably mediate the attachment of the 5S RNA into the large ribosomal subunit, where it forms part of the central protuberance. In the 70S ribosome it contacts protein S13 of the 30S subunit (bridge B1b), connecting the 2 subunits; this bridge is implicated in subunit movement. Contacts the P site tRNA; the 5S rRNA and some of its associated proteins might help stabilize positioning of ribosome-bound tRNAs. The polypeptide is Large ribosomal subunit protein uL5 (Acidovorax ebreus (strain TPSY) (Diaphorobacter sp. (strain TPSY))).